A 533-amino-acid polypeptide reads, in one-letter code: Retinoic acid receptor RXR-beta (533 aa).

The interval 1 to 23 is disordered; sequence MSWAARPPFLPQRHAAGQCGPVG. Residues 1 to 204 are modulating; sequence MSWAARPPFL…PGGPGAGKRL (204 aa). Arg-25 is modified (omega-N-methylarginine). Positions 36 to 181 are disordered; it reads WRRRRPWLDP…GSGPPEDVKP (146 aa). Positions 46–61 are enriched in low complexity; it reads AAAAAAAVAGGEQQTP. Residues 67–82 show a composition bias toward basic and acidic residues; the sequence is EAGRDGMGDSGRDSRS. 2 stretches are compositionally biased toward pro residues: residues 89 to 109 and 118 to 131; these read NPLP…PPST and APPP…PLGS. The span at 132-143 shows a compositional bias: low complexity; it reads PFPVISSSMGSP. Residues 144-153 are compositionally biased toward pro residues; it reads GLPPPAPPGF. 2 consecutive NR C4-type zinc fingers follow at residues 205–225 and 241–265; these read CAIC…CEGC and CRDN…YQKC. A DNA-binding region (nuclear receptor) is located at residues 205 to 270; it reads CAICGDRSSG…RYQKCLATGM (66 aa). Positions 271 to 295 are hinge; that stretch reads KREAVQEERQRGKDKDGDGEGAGGA. Over residues 276 to 288 the composition is skewed to basic and acidic residues; that stretch reads QEERQRGKDKDGD. Disordered regions lie at residues 276 to 299 and 313 to 336; these read QEER…PEEM and QKSD…NDPV. The 234-residue stretch at 296 to 529 folds into the NR LBD domain; that stretch reads PEEMPVDRIL…TFLMEMLEAP (234 aa). A compositionally biased stretch (gly residues) spans 320–329; the sequence is EGPGGTGGSG.

Belongs to the nuclear hormone receptor family. NR2 subfamily. In terms of assembly, homodimer (in vitro). Heterodimer with other retinoic acid receptor family members. Binds DNA preferentially as a RAR/RXR heterodimer. Interacts with NR1H3. Interacts with AKAP13. As to expression, expressed in aortic endothelial cells (at protein level). Expressed in monocytes. Expressed in a variety of tumor cell lines.

Its subcellular location is the nucleus. The protein resides in the cytoplasm. Its function is as follows. Receptor for retinoic acid. Retinoic acid receptors bind as heterodimers to their target response elements in response to their ligands, all-trans or 9-cis retinoic acid, and regulate gene expression in various biological processes. The RAR/RXR heterodimers bind to the retinoic acid response elements (RARE). The polypeptide is Retinoic acid receptor RXR-beta (RXRB) (Homo sapiens (Human)).